The primary structure comprises 698 residues: Colicin V secretion/processing ATP-binding protein CvaB (698 aa).

Residues 26–145 (QTETAECGLA…RYFTGVALEV (120 aa)) enclose the Peptidase C39 domain. C32 is a catalytic residue. The next 7 helical transmembrane spans lie at 33 to 53 (GLAC…LIYL), 92 to 112 (VLKT…LVSV), 176 to 196 (LAKI…MPVG), 211 to 231 (GLLT…AATS), 289 to 311 (TSVI…MLLY), 315 to 334 (LTWI…LVTY), and 412 to 432 (IVIL…IGMF). Positions 176–458 (LAKIFCLSVV…LTSFLLQLRI (283 aa)) constitute an ABC transmembrane type-1 domain. The ABC transporter domain maps to 492 to 698 (LETNGLSYRY…LRTVDRVISI (207 aa)). 526 to 533 (GASGAGKT) provides a ligand contact to ATP.

The protein belongs to the ABC transporter superfamily. Colicin V exporter (TC 3.A.1.110.2) family.

The protein resides in the cell membrane. In terms of biological role, involved, in conjunction with CvaA, in the secretion of colicin V. The polypeptide is Colicin V secretion/processing ATP-binding protein CvaB (cvaB) (Escherichia coli).